The primary structure comprises 391 residues: FLUCTUATING-LIGHT-ACCLIMATION protein 1, chloroplastic (391 aa).

A chloroplast-targeting transit peptide spans 1–48; that stretch reads MASSSTFLELTPFQWNQPLPYTQRPHHRTVLLYSKPQRRSNSIRLQIS. Residues 87-107 traverse the membrane as a helical segment; the sequence is AIAAVLLGLLLFYDPNSALAA. The span at 116–138 shows a compositional bias: low complexity; sequence SFSSRSRSSSSSSSQSYSVPRTS. The segment at 116 to 140 is disordered; sequence SFSSRSRSSSSSSSQSYSVPRTSNP. Transmembrane regions (helical) follow at residues 168-188 and 321-341; these read FGFG…AFVL and YIVV…PING.

The protein belongs to the FLAP family.

Its subcellular location is the plastid. It localises to the chloroplast thylakoid membrane. The protein localises to the chloroplast membrane. The protein resides in the chloroplast envelope. Functionally, monitors proton H(+) homeostasis in chloroplasts to manipulate luminal acidification levels appropriately to balance photoprotection and photochemical processes. Required during acclimation response to fluctuating light (e.g. photosynthetic activity optimization) by controlling non-photochemical quenching (NPQ); acts independently from DLDG1. This is FLUCTUATING-LIGHT-ACCLIMATION protein 1, chloroplastic from Arabidopsis thaliana (Mouse-ear cress).